A 195-amino-acid polypeptide reads, in one-letter code: Large ribosomal subunit protein bL17 (195 aa).

The tract at residues 125 to 195 is disordered; it reads ANRARRVGAS…PTQDSDADKS (71 aa). The segment covering 136–152 has biased composition (low complexity); it reads QTAPVAAAAAPQAAVEP. Composition is skewed to acidic residues over residues 153–173 and 183–195; these read EATEGPDADDSSALPEAEDTT and TDDPTQDSDADKS.

Belongs to the bacterial ribosomal protein bL17 family. Part of the 50S ribosomal subunit. Contacts protein L32.

This chain is Large ribosomal subunit protein bL17, found in Mycobacterium sp. (strain JLS).